We begin with the raw amino-acid sequence, 274 residues long: Putative pyruvate, phosphate dikinase regulatory protein (274 aa).

Position 151-158 (151-158) interacts with ADP; sequence GVSRTSKT.

It belongs to the pyruvate, phosphate/water dikinase regulatory protein family. PDRP subfamily.

It catalyses the reaction N(tele)-phospho-L-histidyl/L-threonyl-[pyruvate, phosphate dikinase] + ADP = N(tele)-phospho-L-histidyl/O-phospho-L-threonyl-[pyruvate, phosphate dikinase] + AMP + H(+). The enzyme catalyses N(tele)-phospho-L-histidyl/O-phospho-L-threonyl-[pyruvate, phosphate dikinase] + phosphate + H(+) = N(tele)-phospho-L-histidyl/L-threonyl-[pyruvate, phosphate dikinase] + diphosphate. Its function is as follows. Bifunctional serine/threonine kinase and phosphorylase involved in the regulation of the pyruvate, phosphate dikinase (PPDK) by catalyzing its phosphorylation/dephosphorylation. The protein is Putative pyruvate, phosphate dikinase regulatory protein of Pelagibacter ubique (strain HTCC1062).